A 155-amino-acid polypeptide reads, in one-letter code: SsrA-binding protein (155 aa).

The protein belongs to the SmpB family.

Its subcellular location is the cytoplasm. Required for rescue of stalled ribosomes mediated by trans-translation. Binds to transfer-messenger RNA (tmRNA), required for stable association of tmRNA with ribosomes. tmRNA and SmpB together mimic tRNA shape, replacing the anticodon stem-loop with SmpB. tmRNA is encoded by the ssrA gene; the 2 termini fold to resemble tRNA(Ala) and it encodes a 'tag peptide', a short internal open reading frame. During trans-translation Ala-aminoacylated tmRNA acts like a tRNA, entering the A-site of stalled ribosomes, displacing the stalled mRNA. The ribosome then switches to translate the ORF on the tmRNA; the nascent peptide is terminated with the 'tag peptide' encoded by the tmRNA and targeted for degradation. The ribosome is freed to recommence translation, which seems to be the essential function of trans-translation. This chain is SsrA-binding protein, found in Oenococcus oeni (strain ATCC BAA-331 / PSU-1).